Reading from the N-terminus, the 108-residue chain is Heme oxygenase (staphylobilin-producing) 2 (108 aa).

The ABM domain occupies 2–93 (FMAENRLQLQ…DDDGQQSPIL (92 aa)). Position 6 (N6) interacts with Fe cation. Heme contacts are provided by residues 21-28 (RFYNRQGI) and H76.

This sequence belongs to the antibiotic biosynthesis monooxygenase family. Heme-degrading monooxygenase IsdG subfamily. Homodimer.

The protein resides in the cytoplasm. It catalyses the reaction heme b + 5 AH2 + 4 O2 + 2 H(+) = delta-staphylobilin + Fe(2+) + formaldehyde + 5 A + 4 H2O. It carries out the reaction heme b + 5 AH2 + 4 O2 + 2 H(+) = beta-staphylobilin + Fe(2+) + formaldehyde + 5 A + 4 H2O. In terms of biological role, allows bacterial pathogens to use the host heme as an iron source. Catalyzes the oxidative degradation of the heme macrocyclic porphyrin ring to the oxo-bilirubin chromophore staphylobilin (a mixture of the linear tetrapyrroles 5-oxo-delta-bilirubin and 15-oxo-beta-bilirubin) in the presence of a suitable electron donor such as ascorbate or NADPH--cytochrome P450 reductase, with subsequent release of free iron. In Staphylococcus aureus (strain MRSA252), this protein is Heme oxygenase (staphylobilin-producing) 2 (isdI).